The chain runs to 803 residues: Zinc finger protein 226 (803 aa).

Residues 8–78 form the KRAB domain; it reads VTFKDVAVAF…TTATRRQGNL (71 aa). The C2H2-type 1; degenerate zinc finger occupies 252-274; the sequence is YQCNECKKPFSDLSSFDLHQQLQ. A C2H2-type 2; degenerate zinc finger spans residues 280-302; that stretch reads LTCVERGKGFCYSPVLPVHQKVH. 17 C2H2-type zinc fingers span residues 307–329, 335–357, 363–385, 391–413, 419–441, 447–469, 475–497, 503–525, 531–553, 559–581, 587–609, 615–637, 643–665, 671–693, 699–721, 727–749, and 755–777; these read LKCD…QKVH, YKCK…CKVH, YNCE…QRLH, FKCD…QRVH, YKCE…QRVH, YKCE…QGVH, YICT…QRVH, YKCN…LVVH, YKCE…QKAH, FKCE…QLIH, YKCE…CRIH, YNCE…QRVH, FKCE…QKVH, YKCD…QRVH, YKCG…QSVH, and YKCE…HRIH. The tract at residues 781–803 is disordered; it reads KSYKSNRGGKNIRESTQEKKSIK. The span at 791–803 shows a compositional bias: basic and acidic residues; sequence NIRESTQEKKSIK.

It belongs to the krueppel C2H2-type zinc-finger protein family.

The protein localises to the nucleus. In terms of biological role, may be involved in transcriptional regulation. The polypeptide is Zinc finger protein 226 (ZNF226) (Homo sapiens (Human)).